Here is a 612-residue protein sequence, read N- to C-terminus: Poly(A) RNA polymerase, mitochondrial (612 aa).

The transit peptide at 1 to 57 (MNSLVRRSAQQLSLWRTYCIKHNASEAASPGRNAGRPNYEEFIGRHQRQAQCSIVVQ) directs the protein to the mitochondrion. ATP is bound by residues 83–89 (YCVRQDE) and 228–229 (GC). Positions 230 and 232 each coordinate Mg(2+). A PAP-associated domain is found at 427 to 463 (SLSELLLQFFEFYSQFDFHNRAISLNEGKPLSKPDHS). Disordered stretches follow at residues 555–574 (AGAT…KSAS) and 588–612 (SELK…RRSR).

This sequence belongs to the DNA polymerase type-B-like family. The cofactor is Mg(2+). Requires Mn(2+) as cofactor.

The protein resides in the mitochondrion. It catalyses the reaction RNA(n) + ATP = RNA(n)-3'-adenine ribonucleotide + diphosphate. Functionally, polymerase that creates the 3' poly(A) tail of mitochondrial transcripts. This is not required for transcript stability or translation but may maintain mRNA integrity by protecting 3' termini from degradation. This is Poly(A) RNA polymerase, mitochondrial from Drosophila melanogaster (Fruit fly).